A 330-amino-acid chain; its full sequence is 5-dehydro-2-deoxygluconokinase (330 aa).

The protein belongs to the carbohydrate kinase PfkB family.

It carries out the reaction 5-dehydro-2-deoxy-D-gluconate + ATP = 6-phospho-5-dehydro-2-deoxy-D-gluconate + ADP + H(+). Its pathway is polyol metabolism; myo-inositol degradation into acetyl-CoA; acetyl-CoA from myo-inositol: step 5/7. Catalyzes the phosphorylation of 5-dehydro-2-deoxy-D-gluconate (2-deoxy-5-keto-D-gluconate or DKG) to 6-phospho-5-dehydro-2-deoxy-D-gluconate (DKGP). The sequence is that of 5-dehydro-2-deoxygluconokinase from Bacillus velezensis (strain DSM 23117 / BGSC 10A6 / LMG 26770 / FZB42) (Bacillus amyloliquefaciens subsp. plantarum).